Reading from the N-terminus, the 402-residue chain is Phosphoglycerate kinase (402 aa).

Substrate-binding positions include 24 to 26 (DFN), arginine 40, 63 to 66 (HFGR), arginine 122, and arginine 155. ATP contacts are provided by residues lysine 206, glycine 297, glutamate 328, and 358-361 (GGDS).

The protein belongs to the phosphoglycerate kinase family. In terms of assembly, monomer.

Its subcellular location is the cytoplasm. The enzyme catalyses (2R)-3-phosphoglycerate + ATP = (2R)-3-phospho-glyceroyl phosphate + ADP. The protein operates within carbohydrate degradation; glycolysis; pyruvate from D-glyceraldehyde 3-phosphate: step 2/5. The chain is Phosphoglycerate kinase from Prochlorococcus marinus (strain AS9601).